A 244-amino-acid chain; its full sequence is PF03932 family protein CutC (244 aa).

It belongs to the CutC family.

Its subcellular location is the cytoplasm. The protein is PF03932 family protein CutC of Pasteurella multocida (strain Pm70).